Consider the following 361-residue polypeptide: uncharacterized protein (361 aa).

WD repeat units follow at residues 57–96 (RHKK…VSSK), 103–142 (KEIS…GIIH), 146–184 (DHID…KPIL), 187–229 (EQDE…DHTD), 237–275 (SHDF…YERI), and 280–318 (SSRS…GDES). The tract at residues 311–361 (DQKEGDESSSSDNLDSDEDSSSDSEFSSPKKKKKVGNQGKKPLGTDFFDGL) is disordered.

The protein resides in the nucleus. Its subcellular location is the nucleolus. This is an uncharacterized protein from Schizosaccharomyces pombe (strain 972 / ATCC 24843) (Fission yeast).